Reading from the N-terminus, the 93-residue chain is Large ribosomal subunit protein bL31B (93 aa).

The protein belongs to the bacterial ribosomal protein bL31 family. Type B subfamily. As to quaternary structure, part of the 50S ribosomal subunit.

This is Large ribosomal subunit protein bL31B from Pseudomonas syringae pv. syringae (strain B728a).